The primary structure comprises 87 residues: Mu-theraphotoxin-Hs1a (87 aa).

An N-terminal signal peptide occupies residues 1-24; that stretch reads MVNMKASMFLTFAGLVLLFVVCYA. Positions 25 to 52 are excised as a propeptide; the sequence is SESEEKEFPKEMLSSIFAVDNDFKQEER. Disulfide bonds link Cys-54/Cys-67, Cys-61/Cys-72, and Cys-66/Cys-79.

This sequence belongs to the neurotoxin 10 (Hwtx-1) family. 51 (Hntx-8) subfamily. Hntx-8 sub-subfamily. Expressed by the venom gland.

The protein resides in the secreted. In terms of biological role, probable sodium channel pore blocker that dose-dependently inhibits voltage-gated sodium channels (VGSC) on DUM neurons in a way similar to tetrodotoxin. Has no effect on the kinetics of activation and inactivation. Seems not to interact with VGSC in an inactivated state. In vivo, reversibly paralyzes cockroaches, and can enhance the muscular contraction elicited by stimulating its nerve. In Cyriopagopus schmidti (Chinese bird spider), this protein is Mu-theraphotoxin-Hs1a.